The chain runs to 437 residues: Amino-acid acetyltransferase (437 aa).

In terms of domain architecture, N-acetyltransferase spans 289 to 429 (ENIRLATSFD…EHYNYQRMSK (141 aa)).

The protein belongs to the acetyltransferase family. ArgA subfamily.

It localises to the cytoplasm. The enzyme catalyses L-glutamate + acetyl-CoA = N-acetyl-L-glutamate + CoA + H(+). It functions in the pathway amino-acid biosynthesis; L-arginine biosynthesis; N(2)-acetyl-L-ornithine from L-glutamate: step 1/4. In Actinobacillus pleuropneumoniae serotype 7 (strain AP76), this protein is Amino-acid acetyltransferase.